The chain runs to 90 residues: Barstar (90 aa).

This sequence belongs to the barstar family.

It is found in the cytoplasm. Inhibitor of the ribonuclease barnase. Forms a one-to-one non-covalent complex. This chain is Barstar, found in Bacillus amyloliquefaciens (Bacillus velezensis).